Reading from the N-terminus, the 463-residue chain is RuvB-like 2 (463 aa).

Position 77 to 84 (77 to 84 (GQPGTGKT)) interacts with ATP.

This sequence belongs to the RuvB family. Forms homohexameric rings. Can form a dodecamer with ruvbl1 made of two stacked hexameric rings. Component of the chromatin-remodeling Ino80 complex. Component of some MLL1/MLL complex.

The protein localises to the nucleus. Its subcellular location is the dynein axonemal particle. It catalyses the reaction ATP + H2O = ADP + phosphate + H(+). Has double-stranded DNA-stimulated ATPase activity. Has ATP-dependent DNA helicase (5' to 3') activity suggesting a role in nuclear processes such as recombination and transcription. Represses gene activation mediated by beta-catenin. Proposed core component of the chromatin remodeling Ino80 complex which exhibits DNA- and nucleosome-activated ATPase activity and catalyzes ATP-dependent nucleosome sliding. Involved in the endoplasmic reticulum (ER)-associated degradation (ERAD) pathway where it negatively regulates expression of ER stress response genes. May act as a regulator of embryonic heart growth. The protein is RuvB-like 2 (ruvbl2) of Danio rerio (Zebrafish).